A 301-amino-acid chain; its full sequence is Pyridoxal 5'-phosphate synthase subunit Pdx1 (301 aa).

D26 provides a ligand contact to D-ribose 5-phosphate. The Schiff-base intermediate with D-ribose 5-phosphate role is filled by K83. G155 provides a ligand contact to D-ribose 5-phosphate. Residue R167 participates in D-glyceraldehyde 3-phosphate binding. D-ribose 5-phosphate-binding positions include G216 and 237 to 238; that span reads GS.

It belongs to the PdxS/SNZ family. As to quaternary structure, homohexamer and homododecamer. In the presence of Pdx2, forms a dodecamer of heterodimers.

The protein localises to the cytoplasm. It catalyses the reaction aldehydo-D-ribose 5-phosphate + D-glyceraldehyde 3-phosphate + L-glutamine = pyridoxal 5'-phosphate + L-glutamate + phosphate + 3 H2O + H(+). It functions in the pathway cofactor biosynthesis; pyridoxal 5'-phosphate biosynthesis. In terms of biological role, catalyzes the formation of pyridoxal 5'-phosphate from ribose 5-phosphate (RBP), glyceraldehyde 3-phosphate (G3P) and ammonia. The ammonia is provided by Pdx2. Can also use ribulose 5-phosphate and dihydroxyacetone phosphate as substrates, resulting from enzyme-catalyzed isomerization of RBP and G3P, respectively. The protein is Pyridoxal 5'-phosphate synthase subunit Pdx1 (pdx1) of Plasmodium falciparum (isolate 3D7).